Consider the following 331-residue polypeptide: MYKIAFDVMGSDNGSAVAIEAASRFIKSRKDLYLVFVGDEDQIKTSLEKFPIDESRFEILATKEFIDMNGSIMDIRRKKDSSMVRALETLKDKKVDAMITGGNSAAFIAGSHFILGELNGISRPGFMPTLPTAVSNKLTLLLDVGANLEADIEDIIGYAKMANIYAKNVLKIENPLIAQLNIGEEKSKGTLLQKEIYKELESDENINFFGNLESRDILAGKVDIIVTDGYTGNMCLKAFEGASKILMTEIKSQLYKTIFTKLKALTLKKSFDNVSKKFDYKNHSGAILLGVEGIAFKAHGSSDVKSFEATLRMTCDAVENDVLNKIKKELN.

The protein belongs to the PlsX family. Homodimer. Probably interacts with PlsY.

The protein localises to the cytoplasm. It catalyses the reaction a fatty acyl-[ACP] + phosphate = an acyl phosphate + holo-[ACP]. It participates in lipid metabolism; phospholipid metabolism. Catalyzes the reversible formation of acyl-phosphate (acyl-PO(4)) from acyl-[acyl-carrier-protein] (acyl-ACP). This enzyme utilizes acyl-ACP as fatty acyl donor, but not acyl-CoA. The protein is Phosphate acyltransferase of Mesoplasma florum (strain ATCC 33453 / NBRC 100688 / NCTC 11704 / L1) (Acholeplasma florum).